Consider the following 177-residue polypeptide: Adenine phosphoribosyltransferase (177 aa).

This sequence belongs to the purine/pyrimidine phosphoribosyltransferase family. In terms of assembly, homodimer.

It is found in the cytoplasm. The enzyme catalyses AMP + diphosphate = 5-phospho-alpha-D-ribose 1-diphosphate + adenine. The protein operates within purine metabolism; AMP biosynthesis via salvage pathway; AMP from adenine: step 1/1. In terms of biological role, catalyzes a salvage reaction resulting in the formation of AMP, that is energically less costly than de novo synthesis. This is Adenine phosphoribosyltransferase from Chlorobium phaeobacteroides (strain DSM 266 / SMG 266 / 2430).